The primary structure comprises 393 residues: S-adenosylmethionine sensor upstream of mTORC1 (393 aa).

The disordered stretch occupies residues 1 to 35 (MDLRSSAETDPDLSENHPGSVPAELQSRKQEQEKL). Arg94 lines the S-adenosyl-L-methionine pocket. The interval 118–141 (DEKSARHATAGNANTDTNAPPQLS) is disordered. The segment covering 125–136 (ATAGNANTDTNA) has biased composition (low complexity). Positions 160, 178, 190, 191, and 232 each coordinate S-adenosyl-L-methionine. The disordered stretch occupies residues 362 to 393 (ELPETPYDSDSGESQSSSAPFYELEDPILLQS).

It belongs to the BMT2/SAMTOR family. Interacts with the GATOR1 complex; interaction is disrupted when samtor binds S-adenosyl-L-methionine. Interacts with the KICSTOR complex; interaction is disrupted when bmt2/samtor binds S-adenosyl-L-methionine.

S-adenosyl-L-methionine-binding protein that acts as an inhibitor of mTORC1 signaling via interaction with the GATOR1 and KICSTOR complexes. Acts as a sensor of S-adenosyl-L-methionine to signal methionine sufficiency to mTORC1: in presence of methionine, binds S-adenosyl-L-methionine, leading to disrupt interaction with the GATOR1 and KICSTOR complexes and promote mTORC1 signaling. Upon methionine starvation, S-adenosyl-L-methionine levels are reduced, thereby promoting the association with GATOR1 and KICSTOR, leading to inhibit mTORC1 signaling. Probably also acts as a S-adenosyl-L-methionine-dependent methyltransferase. The polypeptide is S-adenosylmethionine sensor upstream of mTORC1 (Danio rerio (Zebrafish)).